The primary structure comprises 214 residues: Thymidylate kinase (214 aa).

13-20 lines the ATP pocket; sequence GPDACGKS.

Belongs to the thymidylate kinase family.

The catalysed reaction is dTMP + ATP = dTDP + ADP. Its function is as follows. Phosphorylation of dTMP to form dTDP in both de novo and salvage pathways of dTTP synthesis. This chain is Thymidylate kinase, found in Malacoplasma penetrans (strain HF-2) (Mycoplasma penetrans).